The chain runs to 136 residues: Acyl carrier protein 2, chloroplastic (136 aa).

A chloroplast-targeting transit peptide spans 1 to 51 (MASIAASASISLQARPRQLAIAASQVKSFSNGRRSSLSFNLRQLPTRLTVS). A Carrier domain is found at 56-131 (PETVDKVCAV…QAAALIEELL (76 aa)). Residue S91 is modified to O-(pantetheine 4'-phosphoryl)serine.

It belongs to the acyl carrier protein (ACP) family. Post-translationally, 4'-phosphopantetheine is transferred from CoA to a specific serine of apo-ACP by acpS. This modification is essential for activity because fatty acids are bound in thioester linkage to the sulfhydryl of the prosthetic group.

The protein localises to the plastid. It localises to the chloroplast. Functionally, carrier of the growing fatty acid chain in fatty acid biosynthesis. The polypeptide is Acyl carrier protein 2, chloroplastic (ACP2) (Arabidopsis thaliana (Mouse-ear cress)).